The primary structure comprises 366 residues: Aminomethyltransferase (366 aa).

The protein belongs to the GcvT family. As to quaternary structure, the glycine cleavage system is composed of four proteins: P, T, L and H.

The enzyme catalyses N(6)-[(R)-S(8)-aminomethyldihydrolipoyl]-L-lysyl-[protein] + (6S)-5,6,7,8-tetrahydrofolate = N(6)-[(R)-dihydrolipoyl]-L-lysyl-[protein] + (6R)-5,10-methylene-5,6,7,8-tetrahydrofolate + NH4(+). Its function is as follows. The glycine cleavage system catalyzes the degradation of glycine. The sequence is that of Aminomethyltransferase from Neisseria meningitidis serogroup A / serotype 4A (strain DSM 15465 / Z2491).